Reading from the N-terminus, the 359-residue chain is tRNA pseudouridine synthase B (359 aa).

D63 acts as the Nucleophile in catalysis.

This sequence belongs to the pseudouridine synthase TruB family. Type 1 subfamily.

The catalysed reaction is uridine(55) in tRNA = pseudouridine(55) in tRNA. Functionally, responsible for synthesis of pseudouridine from uracil-55 in the psi GC loop of transfer RNAs. In Psychrobacter cryohalolentis (strain ATCC BAA-1226 / DSM 17306 / VKM B-2378 / K5), this protein is tRNA pseudouridine synthase B.